The sequence spans 700 residues: Polyribonucleotide nucleotidyltransferase (700 aa).

Residues Asp484 and Asp490 each coordinate Mg(2+). The region spanning 551–610 (PRVIRMVVDPEKIREIIGPGGKTISKIIAETGVKIDIEEDGRLYITASDLRSGERAKQMI) is the KH domain. In terms of domain architecture, S1 motif spans 620 to 688 (GEIYLGKVLR…KLGRISLSRK (69 aa)).

It belongs to the polyribonucleotide nucleotidyltransferase family. Mg(2+) serves as cofactor.

It localises to the cytoplasm. It catalyses the reaction RNA(n+1) + phosphate = RNA(n) + a ribonucleoside 5'-diphosphate. Functionally, involved in mRNA degradation. Catalyzes the phosphorolysis of single-stranded polyribonucleotides processively in the 3'- to 5'-direction. This is Polyribonucleotide nucleotidyltransferase from Thermoanaerobacter pseudethanolicus (strain ATCC 33223 / 39E) (Clostridium thermohydrosulfuricum).